Reading from the N-terminus, the 122-residue chain is Large ribosomal subunit protein uL22 (122 aa).

This sequence belongs to the universal ribosomal protein uL22 family. Part of the 50S ribosomal subunit.

In terms of biological role, this protein binds specifically to 23S rRNA; its binding is stimulated by other ribosomal proteins, e.g. L4, L17, and L20. It is important during the early stages of 50S assembly. It makes multiple contacts with different domains of the 23S rRNA in the assembled 50S subunit and ribosome. Its function is as follows. The globular domain of the protein is located near the polypeptide exit tunnel on the outside of the subunit, while an extended beta-hairpin is found that lines the wall of the exit tunnel in the center of the 70S ribosome. This is Large ribosomal subunit protein uL22 from Thermosynechococcus vestitus (strain NIES-2133 / IAM M-273 / BP-1).